The primary structure comprises 359 residues: Peptide chain release factor 1 (359 aa).

Position 235 is an N5-methylglutamine (glutamine 235). Positions 283–309 (QKAESERSQARRSQVGSGDRSERIRTY) are disordered.

The protein belongs to the prokaryotic/mitochondrial release factor family. In terms of processing, methylated by PrmC. Methylation increases the termination efficiency of RF1.

The protein localises to the cytoplasm. Its function is as follows. Peptide chain release factor 1 directs the termination of translation in response to the peptide chain termination codons UAG and UAA. This chain is Peptide chain release factor 1, found in Brucella canis (strain ATCC 23365 / NCTC 10854 / RM-666).